The following is a 292-amino-acid chain: MAISAKLVKELRERTGAGMMDCKKALTETDGDIDKAIDYLREKGIAKAAKKADRIAAEGLVHVEVKGNEAAIVEINSETDFVARNEGFQELVKEIANQVLDSKAETVDALLETKLSSGKTVDERMKEAISTIGEKLSIRRFEIRTKSDNDAFGAYLHMGGRIGVLTVVEGSTDEEAAKDVAMHIAAINPKYVSSEQVKEEEINHEREVLKQQALNEGKPENIVEKMVEGRLRKYLQEICAVDQNFVKDPDQTVEAFLKSKGGKLVDFVRYEVGEGMEKREENFADEVKGQMK.

The interval 79–82 (TDFV) is involved in Mg(2+) ion dislocation from EF-Tu.

It belongs to the EF-Ts family.

It localises to the cytoplasm. Associates with the EF-Tu.GDP complex and induces the exchange of GDP to GTP. It remains bound to the aminoacyl-tRNA.EF-Tu.GTP complex up to the GTP hydrolysis stage on the ribosome. The sequence is that of Elongation factor Ts from Staphylococcus haemolyticus (strain JCSC1435).